Reading from the N-terminus, the 100-residue chain is MASGKPKKKNPRLASGRKRARQGLKLNAANTSLRSKYRTAVKNVEKAVLAGDKTKATELFAKAQSVLDTIADKGIFHKNKAARDKSRLSAKVKALALAAA.

Positions 1–22 are enriched in basic residues; it reads MASGKPKKKNPRLASGRKRARQ. Residues 1 to 26 are disordered; that stretch reads MASGKPKKKNPRLASGRKRARQGLKL.

It belongs to the bacterial ribosomal protein bS20 family.

Its function is as follows. Binds directly to 16S ribosomal RNA. The protein is Small ribosomal subunit protein bS20 of Acidovorax ebreus (strain TPSY) (Diaphorobacter sp. (strain TPSY)).